Reading from the N-terminus, the 338-residue chain is Glycerol-3-phosphate dehydrogenase [NAD(P)+] (338 aa).

Positions 13, 14, and 108 each coordinate NADPH. Sn-glycerol 3-phosphate contacts are provided by K108, G139, and S141. A143 serves as a coordination point for NADPH. Positions 194, 247, 257, 258, and 259 each coordinate sn-glycerol 3-phosphate. The Proton acceptor role is filled by K194. An NADPH-binding site is contributed by R258. 2 residues coordinate NADPH: V282 and E284.

Belongs to the NAD-dependent glycerol-3-phosphate dehydrogenase family.

The protein resides in the cytoplasm. It catalyses the reaction sn-glycerol 3-phosphate + NAD(+) = dihydroxyacetone phosphate + NADH + H(+). The enzyme catalyses sn-glycerol 3-phosphate + NADP(+) = dihydroxyacetone phosphate + NADPH + H(+). The protein operates within membrane lipid metabolism; glycerophospholipid metabolism. In terms of biological role, catalyzes the reduction of the glycolytic intermediate dihydroxyacetone phosphate (DHAP) to sn-glycerol 3-phosphate (G3P), the key precursor for phospholipid synthesis. In Streptococcus gordonii (strain Challis / ATCC 35105 / BCRC 15272 / CH1 / DL1 / V288), this protein is Glycerol-3-phosphate dehydrogenase [NAD(P)+].